We begin with the raw amino-acid sequence, 484 residues long: Phosphoenolpyruvate carboxylase (484 aa).

Belongs to the PEPCase type 2 family. As to quaternary structure, homotetramer. Requires Mg(2+) as cofactor.

It carries out the reaction oxaloacetate + phosphate = phosphoenolpyruvate + hydrogencarbonate. In terms of biological role, catalyzes the irreversible beta-carboxylation of phosphoenolpyruvate (PEP) to form oxaloacetate (OAA), a four-carbon dicarboxylic acid source for the tricarboxylic acid cycle. The protein is Phosphoenolpyruvate carboxylase of Methanospirillum hungatei JF-1 (strain ATCC 27890 / DSM 864 / NBRC 100397 / JF-1).